A 442-amino-acid chain; its full sequence is 23S rRNA (uracil(1939)-C(5))-methyltransferase RlmD (442 aa).

The TRAM domain maps to 10–75 (AKQTAKNCCK…RQYGRAKANK (66 aa)). Residues cysteine 88, cysteine 94, cysteine 97, and cysteine 173 each contribute to the [4Fe-4S] cluster site. Residues glutamine 276, phenylalanine 305, asparagine 310, glutamate 326, asparagine 353, and aspartate 374 each contribute to the S-adenosyl-L-methionine site. Catalysis depends on cysteine 400, which acts as the Nucleophile.

This sequence belongs to the class I-like SAM-binding methyltransferase superfamily. RNA M5U methyltransferase family. RlmD subfamily.

The catalysed reaction is uridine(1939) in 23S rRNA + S-adenosyl-L-methionine = 5-methyluridine(1939) in 23S rRNA + S-adenosyl-L-homocysteine + H(+). Its function is as follows. Catalyzes the formation of 5-methyl-uridine at position 1939 (m5U1939) in 23S rRNA. This Haemophilus ducreyi (strain 35000HP / ATCC 700724) protein is 23S rRNA (uracil(1939)-C(5))-methyltransferase RlmD.